Here is a 96-residue protein sequence, read N- to C-terminus: ESAT-6-like protein SAG1039 (96 aa).

The protein belongs to the WXG100 family. sagEsxA-like subfamily. In terms of assembly, homodimer.

This Streptococcus agalactiae serotype V (strain ATCC BAA-611 / 2603 V/R) protein is ESAT-6-like protein SAG1039.